Here is an 819-residue protein sequence, read N- to C-terminus: Regulator of G-protein signaling rgs-7 (819 aa).

Positions 1–11 (MSDEDADEYDD) are enriched in acidic residues. Disordered regions lie at residues 1-51 (MSDE…EMLW), 112-135 (GDDSSFRSRDRFVPPRRPRMGYGS), and 149-259 (SSTY…HNNE). Residues 32–44 (YQDTTESTGPSEA) are compositionally biased toward polar residues. Residues 112–124 (GDDSSFRSRDRFV) show a composition bias toward basic and acidic residues. Residues 149–166 (SSTYSSSSEAHRLSSLRA) are compositionally biased toward low complexity. A compositionally biased stretch (polar residues) spans 173–185 (QLTSTTTSFQPLS). The span at 213–223 (RMYRKNPKYRR) shows a compositional bias: basic residues. Residues 234–259 (SRLEESTSQESERAVTPESWMEHNNE) are compositionally biased toward basic and acidic residues. The C2 domain maps to 290-429 (KHKDIRGIIF…KASQVVGDPF (140 aa)). Disordered stretches follow at residues 515-594 (YRST…DDNG) and 617-640 (FTFSPKHSSSKTNLRQLNGREEDK). Polar residues-rich tracts occupy residues 517–533 (STGSSDMRGRSTNNLLD), 559–568 (PSITTTTSEN), and 617–632 (FTFSPKHSSSKTNLRQ). Residues 682–800 (SFESLLNNKF…LRDRLFLDLL (119 aa)) enclose the RGS domain.

As to quaternary structure, interacts with egl-30.

Functionally, inhibits signal transduction by increasing the GTPase activity of G protein alpha subunit egl-30 (G-alpha(q)), thereby driving it into its inactive GDP-bound form. May organize egl-30 into a stable multiprotein signaling complex, and thereby persistently inhibit egl-30 when triggered by calcium or phospholipids. In Caenorhabditis elegans, this protein is Regulator of G-protein signaling rgs-7 (rgs-7).